Here is an 829-residue protein sequence, read N- to C-terminus: Probable receptor-like protein kinase At5g59700 (829 aa).

An N-terminal signal peptide occupies residues 1-24 (MGGEKFGFLIWILSIPCLIFLCYG). Topologically, residues 25-406 (YVPVDNYLIN…SSTTKKNVGM (382 aa)) are extracellular. Residues asparagine 40, asparagine 216, asparagine 279, and asparagine 380 are each glycosylated (N-linked (GlcNAc...) asparagine). Residues 407 to 427 (IIGLTIGSLLALVVLGGFFVL) form a helical membrane-spanning segment. Topologically, residues 428-829 (YKKRGRDQDG…FSQLIKSEGR (402 aa)) are cytoplasmic. The Protein kinase domain occupies 482–755 (FDENRAIGVG…GDVLWNLEYA (274 aa)). ATP contacts are provided by residues 488–496 (IGVGGFGKV) and lysine 510. Catalysis depends on aspartate 606, which acts as the Proton acceptor.

It belongs to the protein kinase superfamily. Ser/Thr protein kinase family.

Its subcellular location is the cell membrane. In Arabidopsis thaliana (Mouse-ear cress), this protein is Probable receptor-like protein kinase At5g59700.